The sequence spans 287 residues: 23S rRNA (uridine(2479)-2'-O)-methyltransferase (287 aa).

S-adenosyl-L-methionine-binding positions include 210–211 (TD), glycine 232, and 252–254 (IPM).

The protein belongs to the class IV-like SAM-binding methyltransferase superfamily. RNA methyltransferase TsnR/AvirB family. Homodimer.

The catalysed reaction is uridine(2479) in 23S rRNA + S-adenosyl-L-methionine = 2'-O-methyluridine(2479) in 23S rRNA + S-adenosyl-L-homocysteine + H(+). In terms of biological role, specifically methylates the 2'-O-ribose position of uridine-2479 in 23S ribosomal RNA. Confers resistance to antibiotic avilamycin, an orthosomycin antibiotic. The protein is 23S rRNA (uridine(2479)-2'-O)-methyltransferase (aviRb) of Streptomyces viridochromogenes.